The following is a 434-amino-acid chain: MTAYKGEVFNLPPDKSISHRAALIGALADGTTEISNFSGGFDNQSTLGVLQACGIRLSQDIVQGADGRQTRHVVLHSSGLWSFSAPDAPLMCNNSGSTMRMFAGILAGQPFDSTLVGDNSLMKRPMKRIADPLRRMGAGISLSPDGTAPVGINGTRDLKPITYELPMPSAQVKSLVAFAALHADGESRVIETLPSRNHTELMLDLKTEALSDGRRAVIIPGGKSLEARPFHIPADPSAACFMIALGLLVPGSEILLRDVCLNPTRAGYIELLIGAGADIGFENRRVIGGETIGDIVVRYSGSVEPLRIDEPSIVANIIDEIPMLAVFSACATAEFELHHAAELRTKESDRISAVVSNLQRLGFLCEEFPDGFAVKGRQRVPSGKVILESYDDHRIAMSFAIADKALESELEISDREIIGVSFPNFFDIIESLRQ.

Residues Lys15, Ser16, and Arg20 each coordinate 3-phosphoshikimate. Phosphoenolpyruvate is bound at residue Lys15. Phosphoenolpyruvate-binding residues include Gly96 and Arg124. Ser169, Gln171, Ser195, Asp319, and Lys346 together coordinate 3-phosphoshikimate. Gln171 is a binding site for phosphoenolpyruvate. Catalysis depends on Asp319, which acts as the Proton acceptor. 2 residues coordinate phosphoenolpyruvate: Arg350 and Arg394.

The protein belongs to the EPSP synthase family. Monomer.

It localises to the cytoplasm. The catalysed reaction is 3-phosphoshikimate + phosphoenolpyruvate = 5-O-(1-carboxyvinyl)-3-phosphoshikimate + phosphate. The protein operates within metabolic intermediate biosynthesis; chorismate biosynthesis; chorismate from D-erythrose 4-phosphate and phosphoenolpyruvate: step 6/7. Its function is as follows. Catalyzes the transfer of the enolpyruvyl moiety of phosphoenolpyruvate (PEP) to the 5-hydroxyl of shikimate-3-phosphate (S3P) to produce enolpyruvyl shikimate-3-phosphate and inorganic phosphate. This Prosthecochloris aestuarii (strain DSM 271 / SK 413) protein is 3-phosphoshikimate 1-carboxyvinyltransferase.